The primary structure comprises 374 residues: Heme A synthase (374 aa).

The tract at residues 1–22 is disordered; sequence MSDHIRAASSPSRHGSEHGWQH. Transmembrane regions (helical) follow at residues 32 to 52, 118 to 138, 149 to 169, 184 to 204, and 226 to 246; these read ILVA…VMLG, RLWG…LAVT, LILI…MVAS, VVHL…ALSV, and LGLV…HAGL. His-281 contributes to the heme binding site. 3 consecutive transmembrane segments (helical) span residues 283 to 300, 309 to 329, and 332 to 352; these read LLAT…LIGF, AVLP…ATLL, and VAVP…TAAI. Position 340 (His-340) interacts with heme.

This sequence belongs to the COX15/CtaA family. Type 2 subfamily. In terms of assembly, interacts with CtaB. The cofactor is heme b.

It is found in the cell membrane. It carries out the reaction Fe(II)-heme o + 2 A + H2O = Fe(II)-heme a + 2 AH2. It functions in the pathway porphyrin-containing compound metabolism; heme A biosynthesis; heme A from heme O: step 1/1. Its function is as follows. Catalyzes the conversion of heme O to heme A by two successive hydroxylations of the methyl group at C8. The first hydroxylation forms heme I, the second hydroxylation results in an unstable dihydroxymethyl group, which spontaneously dehydrates, resulting in the formyl group of heme A. This is Heme A synthase from Granulibacter bethesdensis (strain ATCC BAA-1260 / CGDNIH1).